We begin with the raw amino-acid sequence, 391 residues long: Phosphoglycerate kinase (391 aa).

Substrate is bound by residues 21–23 (DLN), R36, 59–62 (HLGR), R113, and R146. ATP-binding positions include K197, E319, and 345–348 (GGDT).

The protein belongs to the phosphoglycerate kinase family. In terms of assembly, monomer.

Its subcellular location is the cytoplasm. It catalyses the reaction (2R)-3-phosphoglycerate + ATP = (2R)-3-phospho-glyceroyl phosphate + ADP. It participates in carbohydrate degradation; glycolysis; pyruvate from D-glyceraldehyde 3-phosphate: step 2/5. This is Phosphoglycerate kinase from Shewanella sp. (strain ANA-3).